Reading from the N-terminus, the 1443-residue chain is Cleavage and polyadenylation specificity factor subunit 1 (1443 aa).

Disordered regions lie at residues 404 to 435, 546 to 570, 715 to 777, and 901 to 921; these read PASAVREAADKEEPPSKKKRVDATAGWSAAGK, EEDNPKGEGTEQEPSTTPEADDDGR, GGAR…PAPF, and FREKKPKPSKKKAEGGGAEEG. Over residues 410 to 419 the composition is skewed to basic and acidic residues; that stretch reads EAADKEEPPS. Residues serine 756 and serine 766 each carry the phosphoserine modification. The segment covering 758-775 has biased composition (basic and acidic residues); sequence SKEEARRSSQPPADRDPA. The short motif at 893–908 is the Nuclear localization signal element; that stretch reads KKVPHNINFREKKPKP.

The protein belongs to the CPSF1 family. Component of the cleavage and polyadenylation specificity factor (CPSF) complex, composed of CPSF1, CPSF2, CPSF3, CPSF4 and FIP1L1. Found in a complex with CPSF1, FIP1L1 and PAPOLA. Interacts with FIP1L1, TENT2/GLD2 and SRRM1. Interacts with TUT1; the interaction is direct and mediates the recruitment of the CPSF complex on the 3'UTR of selected pre-mRNAs. In terms of processing, the N-terminus is blocked. In terms of tissue distribution, widely expressed, with high expression in the retina.

The protein localises to the nucleus. It localises to the nucleoplasm. In terms of biological role, component of the cleavage and polyadenylation specificity factor (CPSF) complex that plays a key role in pre-mRNA 3'-end formation, recognizing the AAUAAA signal sequence and interacting with poly(A) polymerase and other factors to bring about cleavage and poly(A) addition. This subunit is involved in the RNA recognition step of the polyadenylation reaction. May play a role in eye morphogenesis and the development of retinal ganglion cell projections to the midbrain. The chain is Cleavage and polyadenylation specificity factor subunit 1 (CPSF1) from Homo sapiens (Human).